The primary structure comprises 316 residues: RING finger protein 148 (316 aa).

The signal sequence occupies residues M1 to G12. N56 carries an N-linked (GlcNAc...) asparagine glycan. One can recognise a PA domain in the interval V84–H178. A run of 2 helical transmembrane segments spans residues G173–G193 and V204–W224. The segment at C269–K310 adopts an RING-type; atypical zinc-finger fold.

The protein resides in the membrane. The protein is RING finger protein 148 (Rnf148) of Mus musculus (Mouse).